The sequence spans 702 residues: MWQINEVVLFDNDPYRILAIEDGQVVWMQISADKGVPQARAELLLMQYLDEGRLVRTDDPYVHLDLEEPSVDSVSFQKREEDYRKILPIINSKDRFDPKVRSELVEHVVQEHKVTKATVYKLLRRYWQRGQTPNALIPDYKNSGAPGERRSATGTAKIGRAREYGKGEGTKVTPEIERLFRLTIEKHLLNQKGTKTTVAYRRFVDLFAQYFPRIPQEDYPTLRQFRYFYDREYPKAQRLKSRVKAGVYKKDVRPLSSTATSQALGPGSRYEIDATIADIYLVDHHDRQKIIGRPTLYIVIDVFSRMITGFYIGFENPSYVVAMQAFVNACSDKTAICAQHDIEISSSDWPCVGLPDVLLADRGELMSHQVEALVSSFNVRVESAPPRRGDAKGIVESTFRTLQAEFKSFAPGIVEGSRIKSHGETDYRLDASLSVFEFTQIILRTILFRNNHLVMDKYDRDADFPTDLPSIPVQLWQWGMQHRTGSLRAVEQEQLRVALLPRRKVSISSFGVNLWGLYYSGSEILREGWLQRSTDIARPQHLEAAYDPVLVDTIYLFPQVGSRVFWRCNLTERSRQFKGLSFWEVWDIQAQEKHNKANAKQDELTKRRELEAFIQQTIQKANKLTPSTTEPKSTRIKQIKTNKKEAVTSERKKRAEHLKPSSSGDEAKVIPFNAVEADDQEDYSLPTYVPELFQDPPEKDES.

Residues 1–139 (MWQINEVVLF…GQTPNALIPD (139 aa)) form a DNA-binding domain 1 (DBD1) region. The H-T-H motif DNA-binding region spans 105-124 (VEHVVQEHKVTKATVYKLLR). Positions 137-160 (IPDYKNSGAPGERRSATGTAKIGR) are disordered. Residues 140–172 (YKNSGAPGERRSATGTAKIGRAREYGKGEGTKV) are linker 1. The segment at 173–233 (TPEIERLFRL…QFRYFYDREY (61 aa)) is DNA-binding domain 2 (DBD2). Residues 234-267 (PKAQRLKSRVKAGVYKKDVRPLSSTATSQALGPG) form a linker 2 region. Positions 262 to 480 (QALGPGSRYE…IPVQLWQWGM (219 aa)) constitute an Integrase catalytic domain. Residues 268 to 582 (SRYEIDATIA…RSRQFKGLSF (315 aa)) form a catalytic domain (CD) region. The C-terminal domain stretch occupies residues 589-702 (QAQEKHNKAN…FQDPPEKDES (114 aa)). The segment at 623 to 702 (KLTPSTTEPK…FQDPPEKDES (80 aa)) is disordered.

In terms of assembly, heteromer with TnsA.

Sequence-specific, DNA-binding protein required for Tn7 transposition. Recognizes sequences necessary for recombination at both left and right ends of Tn7 and, together with TnsA, forms the transposase. TnsB executes the 3'-DNA strand breakage and joining reactions. TnsB binding introduces DNA bending. There are 3 DNA-binding sites in the left and 4 in the right end of Tn7; as TnsB levels increase more TnsB is bound, suggesting high protein levels contribute to transposon immunity. Binding of TnsB to the transposon right end represses expression of the downstream transposition genes. TnsABC + TnsD promote high-frequency insertion of Tn7 into a specific target site known as att-Tn7 whereas TnsABC + TnsE promote low-frequency insertion into many different sites. The sequence is that of Transposon Tn7 transposition protein TnsB from Escherichia coli.